The sequence spans 179 residues: Probable phosphopantothenoylcysteine decarboxylase (179 aa).

N124 contributes to the substrate binding site. Residue C157 is the Proton donor of the active site.

It belongs to the HFCD (homooligomeric flavin containing Cys decarboxylase) superfamily. FMN is required as a cofactor.

The enzyme catalyses N-[(R)-4-phosphopantothenoyl]-L-cysteine + H(+) = (R)-4'-phosphopantetheine + CO2. It functions in the pathway cofactor biosynthesis; coenzyme A biosynthesis; CoA from (R)-pantothenate: step 3/5. Catalyzes the decarboxylation of 4'-phosphopantothenoylcysteine to 4'-phosphopantetheine. The sequence is that of Probable phosphopantothenoylcysteine decarboxylase (coaC) from Streptococcus mutans serotype c (strain ATCC 700610 / UA159).